The chain runs to 159 residues: Ribosomal RNA large subunit methyltransferase H (159 aa).

S-adenosyl-L-methionine is bound by residues Gly108 and 127–132 (FSKMTF).

This sequence belongs to the RNA methyltransferase RlmH family. As to quaternary structure, homodimer.

The protein resides in the cytoplasm. It carries out the reaction pseudouridine(1915) in 23S rRNA + S-adenosyl-L-methionine = N(3)-methylpseudouridine(1915) in 23S rRNA + S-adenosyl-L-homocysteine + H(+). In terms of biological role, specifically methylates the pseudouridine at position 1915 (m3Psi1915) in 23S rRNA. In Clostridium perfringens (strain ATCC 13124 / DSM 756 / JCM 1290 / NCIMB 6125 / NCTC 8237 / Type A), this protein is Ribosomal RNA large subunit methyltransferase H.